Consider the following 470-residue polypeptide: Cysteine--tRNA ligase (470 aa).

Cys28 lines the Zn(2+) pocket. Positions 30 to 40 (PTVYNYIHIGN) match the 'HIGH' region motif. Zn(2+)-binding residues include Cys212, His237, and Glu241. The short motif at 271–275 (KMSKS) is the 'KMSKS' region element. An ATP-binding site is contributed by Lys274.

The protein belongs to the class-I aminoacyl-tRNA synthetase family. Monomer. Zn(2+) is required as a cofactor.

Its subcellular location is the cytoplasm. It catalyses the reaction tRNA(Cys) + L-cysteine + ATP = L-cysteinyl-tRNA(Cys) + AMP + diphosphate. The polypeptide is Cysteine--tRNA ligase (Ligilactobacillus salivarius (strain UCC118) (Lactobacillus salivarius)).